A 420-amino-acid chain; its full sequence is uncharacterized protein (420 aa).

2 disordered regions span residues 84–103 (RSQANSESTPPEHTWSGTSE) and 122–211 (SMNN…NKKS). The span at 85–103 (SQANSESTPPEHTWSGTSE) shows a compositional bias: polar residues. The span at 184–199 (SMTDQEVEQRRKEANK) shows a compositional bias: basic and acidic residues. Coiled-coil stretches lie at residues 265 to 310 (TEKE…TATN) and 345 to 374 (LQFKIKKFERREKLLEEVENQIKQYFNFKE). Residues 399-408 (KTSSPKTSIA) are compositionally biased toward polar residues. The interval 399–420 (KTSSPKTSIAGSHRRSTRSSEN) is disordered. Residues 410–420 (SHRRSTRSSEN) are compositionally biased toward basic residues.

This is an uncharacterized protein from Caenorhabditis elegans.